Here is a 350-residue protein sequence, read N- to C-terminus: Histidinol-phosphate aminotransferase (350 aa).

An N6-(pyridoxal phosphate)lysine modification is found at Lys-220.

This sequence belongs to the class-II pyridoxal-phosphate-dependent aminotransferase family. Histidinol-phosphate aminotransferase subfamily. Homodimer. Pyridoxal 5'-phosphate serves as cofactor.

The catalysed reaction is L-histidinol phosphate + 2-oxoglutarate = 3-(imidazol-4-yl)-2-oxopropyl phosphate + L-glutamate. Its pathway is amino-acid biosynthesis; L-histidine biosynthesis; L-histidine from 5-phospho-alpha-D-ribose 1-diphosphate: step 7/9. The protein is Histidinol-phosphate aminotransferase of Macrococcus caseolyticus (strain JCSC5402) (Macrococcoides caseolyticum).